A 126-amino-acid chain; its full sequence is Small ribosomal subunit protein uS13 (126 aa).

The interval 96–126 (LPVRGQQTKTNARTRKGRRKGTVANKKKVSK) is disordered. Residues 107–126 (ARTRKGRRKGTVANKKKVSK) show a composition bias toward basic residues.

Belongs to the universal ribosomal protein uS13 family. Part of the 30S ribosomal subunit. Forms a loose heterodimer with protein S19. Forms two bridges to the 50S subunit in the 70S ribosome.

Located at the top of the head of the 30S subunit, it contacts several helices of the 16S rRNA. In the 70S ribosome it contacts the 23S rRNA (bridge B1a) and protein L5 of the 50S subunit (bridge B1b), connecting the 2 subunits; these bridges are implicated in subunit movement. Contacts the tRNAs in the A and P-sites. The sequence is that of Small ribosomal subunit protein uS13 from Hydrogenobaculum sp. (strain Y04AAS1).